The primary structure comprises 147 residues: Hemoglobin subunit epsilon (147 aa).

Residues 3–147 form the Globin domain; the sequence is HFTAEEKAAV…VAIALAHKYH (145 aa). Residues S14 and S51 each carry the phosphoserine modification. Positions 64 and 93 each coordinate heme b.

The protein belongs to the globin family. Heterotetramer of two alpha chains and two epsilon chains in early embryonic hemoglobin Gower-2; two zeta chains and two epsilon chains in early embryonic hemoglobin Gower-1. Red blood cells.

In terms of biological role, the epsilon chain is a beta-type chain of early mammalian embryonic hemoglobin. This chain is Hemoglobin subunit epsilon (HBE1), found in Pongo pygmaeus (Bornean orangutan).